Here is a 1479-residue protein sequence, read N- to C-terminus: Type VII secretion system protein EssC (1479 aa).

Residues 1–229 (MHKLIIKYNK…RPPQPIQKNN (229 aa)) are Cytoplasmic-facing. A helical membrane pass occupies residues 230-252 (TVIWRSIIPPLVMIALTVVIFLV). Topologically, residues 253 to 256 (RPIG) are extracellular. The chain crosses the membrane as a helical span at residues 257 to 279 (IYILMMIGMSTVTIVFGITTYFS). Topologically, residues 280–1479 (EKKKYNKDVE…QAYQKIRWFK (1200 aa)) are cytoplasmic. FtsK domains are found at residues 652–846 (DDIL…QDSN) and 997–1183 (QGPM…SEVS). ATP is bound by residues 672-679 (GTTGSGKS) and 1014-1021 (GSPGYGRT).

The protein belongs to the EssC family. In terms of assembly, homooligomer. Interacts with EsaE.

It localises to the cell membrane. Its function is as follows. Component of the type VII secretion system (Ess). Required for the secretion of substrates including EsxA and EsxB. However, unable to support secretion of the substrate protein EsxC. This chain is Type VII secretion system protein EssC, found in Staphylococcus aureus (strain Mu50 / ATCC 700699).